A 551-amino-acid chain; its full sequence is Urocanate hydratase (551 aa).

Residues 48 to 49 (GG), Gln126, 172 to 174 (GMG), Glu192, Arg197, 238 to 239 (NA), 259 to 263 (QTSAH), 269 to 270 (YI), and Tyr318 contribute to the NAD(+) site. Cys406 is a catalytic residue. Residue Gly488 participates in NAD(+) binding.

Belongs to the urocanase family. NAD(+) serves as cofactor.

It localises to the cytoplasm. The catalysed reaction is 4-imidazolone-5-propanoate = trans-urocanate + H2O. It participates in amino-acid degradation; L-histidine degradation into L-glutamate; N-formimidoyl-L-glutamate from L-histidine: step 2/3. In terms of biological role, catalyzes the conversion of urocanate to 4-imidazolone-5-propionate. This is Urocanate hydratase from Symbiobacterium thermophilum (strain DSM 24528 / JCM 14929 / IAM 14863 / T).